The following is a 378-amino-acid chain: Glutamate 5-kinase (378 aa).

Residue lysine 14 participates in ATP binding. Positions 54, 141, and 153 each coordinate substrate. 173 to 174 (SD) contacts ATP. The PUA domain occupies 279–356 (AGRLTVDAGA…DEISAILGYD (78 aa)).

Belongs to the glutamate 5-kinase family.

It localises to the cytoplasm. The enzyme catalyses L-glutamate + ATP = L-glutamyl 5-phosphate + ADP. It functions in the pathway amino-acid biosynthesis; L-proline biosynthesis; L-glutamate 5-semialdehyde from L-glutamate: step 1/2. In terms of biological role, catalyzes the transfer of a phosphate group to glutamate to form L-glutamate 5-phosphate. In Brucella canis (strain ATCC 23365 / NCTC 10854 / RM-666), this protein is Glutamate 5-kinase.